The primary structure comprises 250 residues: Sulfate transporter CysZ (250 aa).

Helical transmembrane passes span 26-46 (LFVL…IYLA), 71-91 (ILWP…FTML), 150-170 (LFIL…WLLF), and 211-231 (IVYL…AAVA).

Belongs to the CysZ family.

The protein localises to the cell inner membrane. Functionally, high affinity, high specificity proton-dependent sulfate transporter, which mediates sulfate uptake. Provides the sulfur source for the cysteine synthesis pathway. This Pseudomonas fluorescens (strain Pf0-1) protein is Sulfate transporter CysZ.